Here is a 540-residue protein sequence, read N- to C-terminus: Phosphoenolpyruvate carboxykinase (ATP) (540 aa).

Substrate is bound at residue Arg65. Lys87 is subject to N6-acetyllysine. Residues Tyr207 and Lys213 each coordinate substrate. ATP-binding positions include Lys213, His232, and Gly248–Thr256. Positions 213 and 232 each coordinate Mn(2+). Asp269 is a Mn(2+) binding site. ATP contacts are provided by residues Glu297, Arg333, Arg449–Ile450, and Thr455. A substrate-binding site is contributed by Arg333. Lys523 is modified (N6-acetyllysine).

The protein belongs to the phosphoenolpyruvate carboxykinase (ATP) family. Monomer. The cofactor is Mn(2+).

The protein localises to the cytoplasm. It carries out the reaction oxaloacetate + ATP = phosphoenolpyruvate + ADP + CO2. It participates in carbohydrate biosynthesis; gluconeogenesis. In terms of biological role, involved in the gluconeogenesis. Catalyzes the conversion of oxaloacetate (OAA) to phosphoenolpyruvate (PEP) through direct phosphoryl transfer between the nucleoside triphosphate and OAA. This is Phosphoenolpyruvate carboxykinase (ATP) from Escherichia coli O127:H6 (strain E2348/69 / EPEC).